The chain runs to 824 residues: MVCPKVVILSEGADLDSLSAAYGVLKLYPDAYLLKPKHLSKKAGEVFKKYRDKFRVIEDLPDCFELVLVDTHFLPEGLPRERIKRIIVYDHHPIGDVKEFEGKIEKVGAATTLVVEEIKEKGIDINPRDATLLAFGIYEDTGNFTYEGTTPRDALALAFLLEKGANLREIREVVMETYTPEQIEAVGKIVQSIEKVFINGRQISFATAVLERYQPDINTLLYEIKDLKESDAFFVIIEAEGKTYVFGRSQSEDVDVGEILSHFGGGGHREAGAVKLENVSAERIKELIKAFLKRKYVKLKVRDIMNTPPFVLEEHVSVKDALTELSERGIANAPVINREGKLVGIISKKALLKLVKLYPDEPIELFVNRDFYTLSPDAPVWEAEEILTKFGQKLIPVVEDGTVVGVVTRLDILQAVKEDLEKLKEKRRKIKVPENIEEIAREVGQIAKEMGLRAYIVGGVVRDILLGKEVWDVDFVVEGNAIELAKELARRHGVNVHPFPEFGTAHLKIGKLKLEFATARRETYPRPGAYPKVEPASLKEDLIRRDFTINAMAISVNLEDYGTLIDYFGGLRDLKDKVIRVLHPVSFIEDPVRILRALRFAGRLNFKLSRSTEKLLKQAVNLGLLKEAPRGRLINEIKLALREDRFLEILELYRKYRVLEEIIEGFQWNEKVLQKLYALRKVVDWHALEFSEERIDYGWLYLLILISNLDYERGKHFLEEMSAPSWVRETYKFMKFKLGSLKEELKKAKENYEVYRLLKPLHTSVLLLLMLEEELKEKIKLYLEKLRKVKLPKEKIEELKKQGLKGKELGERIEELKREIMNKI.

CBS domains are found at residues 305–363 (MNTP…DEPI) and 367–423 (VNRD…LEKL). 459 to 462 (GVVR) contributes to the ATP binding site. 2 residues coordinate Mg(2+): Asp-472 and Asp-474. ATP contacts are provided by residues 545 to 546 (RD), Asn-550, 590 to 599 (DPVRILRALR), Arg-603, and Arg-632.

This sequence belongs to the tRNA nucleotidyltransferase/poly(A) polymerase family. It depends on Mg(2+) as a cofactor.

The enzyme catalyses a tRNA with a 3' CC end + ATP = a tRNA with a 3' CCA end + diphosphate. TRNA nucleotidyltransferase involved in the synthesis of the tRNA CCA terminus. Adds the terminal adenosine residue to tRNA. Can incorporate CMP into tRNA ending with C74C75 (tRNACC), with very weak efficiency. The protein is A-adding tRNA nucleotidyltransferase of Aquifex aeolicus (strain VF5).